The primary structure comprises 707 residues: MAP kinase-interacting serine/threonine-protein kinase mnk-1 (707 aa).

Residues methionine 1 to serine 24 show a composition bias toward polar residues. Disordered regions lie at residues methionine 1–valine 29 and arginine 101–arginine 131. One can recognise a Protein kinase domain in the interval lysine 203–leucine 493. Residues leucine 209 to valine 217 and lysine 232 contribute to the ATP site. Residue aspartate 325 is the Proton acceptor of the active site. Disordered regions lie at residues arginine 589–aspartate 628 and phenylalanine 688–valine 707.

It belongs to the protein kinase superfamily. CAMK Ser/Thr protein kinase family. Mg(2+) serves as cofactor. In terms of tissue distribution, expressed in pharynx, intestine, vulva and body wall muscles.

Its subcellular location is the nucleus. It is found in the cytoplasm. The catalysed reaction is L-seryl-[protein] + ATP = O-phospho-L-seryl-[protein] + ADP + H(+). It catalyses the reaction L-threonyl-[protein] + ATP = O-phospho-L-threonyl-[protein] + ADP + H(+). In terms of biological role, serine/threonine-protein kinase which is required in the germline to positively regulate lifespan. May play a role in body wall muscle contraction. May be involved in embryonic cytokinesis. In Caenorhabditis elegans, this protein is MAP kinase-interacting serine/threonine-protein kinase mnk-1.